The following is a 159-amino-acid chain: IQ domain-containing protein J (159 aa).

The IQ domain maps to 47–67 (ESKVKIIQRAWREYLQRQEPL). The disordered stretch occupies residues 63-88 (RQEPLGKRSPSPPSVSSEKLSSSVSM). The segment covering 76–87 (SVSSEKLSSSVS) has biased composition (low complexity).

This chain is IQ domain-containing protein J, found in Homo sapiens (Human).